A 272-amino-acid chain; its full sequence is GTP cyclohydrolase FolE2 (272 aa).

This sequence belongs to the GTP cyclohydrolase IV family.

The catalysed reaction is GTP + H2O = 7,8-dihydroneopterin 3'-triphosphate + formate + H(+). The protein operates within cofactor biosynthesis; 7,8-dihydroneopterin triphosphate biosynthesis; 7,8-dihydroneopterin triphosphate from GTP: step 1/1. Functionally, converts GTP to 7,8-dihydroneopterin triphosphate. The protein is GTP cyclohydrolase FolE2 of Polynucleobacter asymbioticus (strain DSM 18221 / CIP 109841 / QLW-P1DMWA-1) (Polynucleobacter necessarius subsp. asymbioticus).